The sequence spans 101 residues: MAKKSMKNRELKRQLTVAKYAKKRAELKAIIVDLNASPEARWEATVALQKQPRDASAARMRNRCRITGRPHGVYRKFGLGRNKLREAAMRGDVPGLVKASW.

Belongs to the universal ribosomal protein uS14 family. In terms of assembly, part of the 30S ribosomal subunit. Contacts proteins S3 and S10.

Its function is as follows. Binds 16S rRNA, required for the assembly of 30S particles and may also be responsible for determining the conformation of the 16S rRNA at the A site. This is Small ribosomal subunit protein uS14 from Pseudomonas syringae pv. tomato (strain ATCC BAA-871 / DC3000).